The sequence spans 166 residues: Ribosome maturation factor RimM (166 aa).

The PRC barrel domain maps to 90 to 163; the sequence is EGEFLVSQII…TVTIELLEGL (74 aa).

The protein belongs to the RimM family. As to quaternary structure, binds ribosomal protein uS19.

It is found in the cytoplasm. In terms of biological role, an accessory protein needed during the final step in the assembly of 30S ribosomal subunit, possibly for assembly of the head region. Essential for efficient processing of 16S rRNA. May be needed both before and after RbfA during the maturation of 16S rRNA. It has affinity for free ribosomal 30S subunits but not for 70S ribosomes. The chain is Ribosome maturation factor RimM from Oenococcus oeni (strain ATCC BAA-331 / PSU-1).